Consider the following 249-residue polypeptide: 23S rRNA (guanosine-2'-O-)-methyltransferase RlmB (249 aa).

S-adenosyl-L-methionine is bound by residues Gly200, Ile220, and Leu229.

Belongs to the class IV-like SAM-binding methyltransferase superfamily. RNA methyltransferase TrmH family. RlmB subfamily.

It localises to the cytoplasm. The catalysed reaction is guanosine(2251) in 23S rRNA + S-adenosyl-L-methionine = 2'-O-methylguanosine(2251) in 23S rRNA + S-adenosyl-L-homocysteine + H(+). Specifically methylates the ribose of guanosine 2251 in 23S rRNA. This is 23S rRNA (guanosine-2'-O-)-methyltransferase RlmB from Xylella fastidiosa (strain 9a5c).